A 210-amino-acid polypeptide reads, in one-letter code: MSTHHGPLRVGIGGPVGSGKTALMDLLCKSMRERYDIAAITNDIYTKWDAEFLVRSGSLTPDRIAGVETGGCPHTAIREDASMNLAAVAEMRSKFPGLDLVLIESGGDNLAATFSPELADLTIYVIDVSAGDKIPSKGGPGITRSDLLVINKIDLAPYVGASLDKMDADARRMRGERPFVMTNLKTREGLERILSFIETKGGLKPKADTA.

14–21 lines the GTP pocket; it reads GPVGSGKT.

It belongs to the SIMIBI class G3E GTPase family. UreG subfamily. As to quaternary structure, homodimer. UreD, UreF and UreG form a complex that acts as a GTP-hydrolysis-dependent molecular chaperone, activating the urease apoprotein by helping to assemble the nickel containing metallocenter of UreC. The UreE protein probably delivers the nickel.

It localises to the cytoplasm. In terms of biological role, facilitates the functional incorporation of the urease nickel metallocenter. This process requires GTP hydrolysis, probably effectuated by UreG. The protein is Urease accessory protein UreG of Rhodopseudomonas palustris (strain BisB5).